The primary structure comprises 228 residues: Casparian strip membrane protein 2 (228 aa).

Over 1 to 65 (MSTSDAAATV…FRRADRGSRC (65 aa)) the chain is Cytoplasmic. The chain crosses the membrane as a helical span at residues 66 to 86 (VALLDLVLRVAAFGPALAAAI). The Extracellular portion of the chain corresponds to 87-113 (ATGTSDETLSVFTQFFQFHARFDDFPA). A helical membrane pass occupies residues 114–134 (LLFFMVANAIAAGYLVLSLPF). The Cytoplasmic segment spans residues 135 to 149 (SAVVVLRPQAIGLRH). A helical membrane pass occupies residues 150–170 (LLLICDLIIAALLTAAAAAAA). Residues 171-201 (AIVDLAHSGNQRANWVPICMQFHGFCQRTSG) are Extracellular-facing. A helical membrane pass occupies residues 202-222 (AVVASFLAVLVLLFLVILAAF). The Cytoplasmic portion of the chain corresponds to 223–228 (TIRKRC).

It belongs to the Casparian strip membrane proteins (CASP) family. As to quaternary structure, homodimer and heterodimers.

It localises to the cell membrane. Its function is as follows. Regulates membrane-cell wall junctions and localized cell wall deposition. Required for establishment of the Casparian strip membrane domain (CSD) and the subsequent formation of Casparian strips, a cell wall modification of the root endodermis that determines an apoplastic barrier between the intraorganismal apoplasm and the extraorganismal apoplasm and prevents lateral diffusion. In Zea mays (Maize), this protein is Casparian strip membrane protein 2.